Here is a 264-residue protein sequence, read N- to C-terminus: Tropomyosin Cha f 1.0101 (264 aa).

The residue at position 1 (M1) is an N-acetylmethionine. 2 disordered regions span residues 1-56 (MDAI…VENE) and 92-126 (IQLP…SERM). Residues 1–264 (MDAIKKKMQA…RLEDELVNEK (264 aa)) adopt a coiled-coil conformation. Residues 12–45 (KLEKDNAMDRADTLEQQNKEANLRAEKTEEEIRA) are compositionally biased toward basic and acidic residues.

The protein belongs to the tropomyosin family. Homodimer. In terms of tissue distribution, expressed in muscle (at protein level). Expressed in claw muscles.

In terms of biological role, tropomyosin, in association with the troponin complex, plays a central role in the calcium dependent regulation of muscle contraction. The protein is Tropomyosin Cha f 1.0101 of Charybdis feriata (Crucifix crab).